Reading from the N-terminus, the 234-residue chain is BTB/POZ domain-containing protein KCTD5 (234 aa).

At Ala-2 the chain carries N-acetylalanine. Ser-10 bears the Phosphoserine mark. Positions 44–146 constitute a BTB domain; it reads KWVRLNVGGT…LVKDKIRERD (103 aa). The tract at residues 213–234 is disordered; sequence PYGTASEPSEKAKILQERGSRM. Positions 220–234 are enriched in basic and acidic residues; sequence PSEKAKILQERGSRM.

As to quaternary structure, homopentamer. Interacts (via C-terminus) with GRASP55/GORASP2. Interacts with CUL3 and with ubiquitinated proteins. Interacts with CRY1. In terms of assembly, (Microbial infection) Interacts with adeno-associated virus 2 (AAV-2) REP proteins.

The protein localises to the cytoplasm. It is found in the cytosol. It localises to the nucleus. Its interaction with CUL3 suggests that it may act as a substrate adapter in some E3 ligase complex. Does not affect the function of Kv channel Kv2.1/KCNB1, Kv1.2/KCNA2, Kv4.2/KCND2 and Kv3.4/KCNC4. The sequence is that of BTB/POZ domain-containing protein KCTD5 (KCTD5) from Homo sapiens (Human).